A 410-amino-acid chain; its full sequence is Putative odorant receptor 65c (410 aa).

The Cytoplasmic segment spans residues 1-59 (MDIRGNVHRFVKFYIDGWKHFRDPTMESSYSAVYYWREQMKAMFLYTTSKERQMPYRSS). A helical membrane pass occupies residues 60 to 80 (WHTLVIIQATVCFLTMCYGVT). Over 81 to 92 (ESLGDKVQMGRD) the chain is Extracellular. The helical transmembrane segment at 93 to 113 (IAFIIGFFYIAFKIYYFQWYG) threads the bilayer. Topologically, residues 114-148 (DELDEVVEALETFHPWAQKGPGAVDYRTAKRWYFT) are cytoplasmic. A helical transmembrane segment spans residues 149-169 (LAFFLASSWLVFLCIFILLLI). Topologically, residues 170-222 (TSPLWVHQQILPLHAAFPFQWHEKSIHPISHAFIYLFQTWNVMYFLTWLVCIE) are extracellular. A helical membrane pass occupies residues 223 to 243 (GLSVSIYVEITFAIEVLCLEL). Residues 244–279 (RHLHQRCHGYEQLRLETNRLVQFHQKIVHILDHTNK) lie on the Cytoplasmic side of the membrane. A helical transmembrane segment spans residues 280–300 (VFHGTLIMQMGVNFFLVSLSV). Topologically, residues 301-312 (LEAMEARKDPKV) are extracellular. Residues 313–333 (VAQFAVLMLLALGHLSMWSYF) traverse the membrane as a helical segment. At 334–385 (GDLLSQKSLTISEAAYEAYDPIKGSKDVYRDLCLIIRRGQEPLIMRASPFPS) the chain is on the cytoplasmic side. Residues 386 to 406 (FNFINYSAILNQCYGILTFLL) form a helical membrane-spanning segment. Residues 407–410 (KTLD) lie on the Extracellular side of the membrane.

It belongs to the insect chemoreceptor superfamily. Heteromeric odorant receptor channel (TC 1.A.69) family. Or49a subfamily. In terms of assembly, interacts with Orco. Complexes exist early in the endomembrane system in olfactory sensory neurons (OSNs), coupling these complexes to the conserved ciliary trafficking pathway.

The protein resides in the cell membrane. Functionally, odorant receptor which mediates acceptance or avoidance behavior, depending on its substrates. The odorant receptor repertoire encodes a large collection of odor stimuli that vary widely in identity, intensity, and duration. May form a complex with Orco to form odorant-sensing units, providing sensitive and prolonged odorant signaling and calcium permeability. The sequence is that of Putative odorant receptor 65c (Or65c) from Drosophila melanogaster (Fruit fly).